The sequence spans 795 residues: Phenylalanine--tRNA ligase beta subunit (795 aa).

Residues 39-148 form the tRNA-binding domain; sequence AGSFHGVVVG…ADAPIGTDIR (110 aa). In terms of domain architecture, B5 spans 401–476; the sequence is PKRATITLRR…RVYGYNNIPD (76 aa). Mg(2+) contacts are provided by aspartate 454, aspartate 460, glutamate 463, and glutamate 464. Residues 701 to 794 enclose the FDX-ACB domain; that stretch reads SRFPANRRDI…LKERFQASLR (94 aa).

It belongs to the phenylalanyl-tRNA synthetase beta subunit family. Type 1 subfamily. As to quaternary structure, tetramer of two alpha and two beta subunits. Mg(2+) is required as a cofactor.

Its subcellular location is the cytoplasm. It carries out the reaction tRNA(Phe) + L-phenylalanine + ATP = L-phenylalanyl-tRNA(Phe) + AMP + diphosphate + H(+). The polypeptide is Phenylalanine--tRNA ligase beta subunit (Shigella dysenteriae serotype 1 (strain Sd197)).